The following is a 382-amino-acid chain: Alkane 1-monooxygenase 2 (382 aa).

4 helical membrane passes run 17–37 (GYLA…FVGV), 45–65 (WAWF…YLVG), 88–108 (VSAI…GHIF), and 114–134 (GLLG…IIAI). The Fe cation site is built by His138, His142, His168, His172, and His173. The chain crosses the membrane as a helical span at residues 236–256 (ALFAATFGLLWGWQGVVFFLG). Fe cation-binding residues include His312, His315, and His316.

Belongs to the fatty acid desaturase type 1 family. AlkB subfamily. The cofactor is Fe(3+).

It localises to the cell inner membrane. The enzyme catalyses octane + 2 reduced [rubredoxin] + O2 + 2 H(+) = 2 oxidized [rubredoxin] + octan-1-ol + H2O. It functions in the pathway hydrocarbon metabolism; alkane degradation. Catalyzes the hydroxylation of n-alkanes in the presence of a NADH-rubredoxin reductase and rubredoxin. It preferably hydroxylases C8-C16 hydrocarbons. This chain is Alkane 1-monooxygenase 2 (alkB2), found in Alcanivorax borkumensis (strain ATCC 700651 / DSM 11573 / NCIMB 13689 / SK2).